A 380-amino-acid polypeptide reads, in one-letter code: Succinate--CoA ligase [ADP-forming] subunit beta (380 aa).

One can recognise an ATP-grasp domain in the interval Arg-9–Arg-237. ATP is bound by residues Lys-45, Gly-52–Gly-54, Val-94, and Glu-99. Mg(2+)-binding residues include Asn-192 and Asp-206. Residues Asn-257 and Gly-314–Thr-316 contribute to the substrate site.

It belongs to the succinate/malate CoA ligase beta subunit family. Heterotetramer of two alpha and two beta subunits. The cofactor is Mg(2+).

The catalysed reaction is succinate + ATP + CoA = succinyl-CoA + ADP + phosphate. It carries out the reaction GTP + succinate + CoA = succinyl-CoA + GDP + phosphate. It functions in the pathway carbohydrate metabolism; tricarboxylic acid cycle; succinate from succinyl-CoA (ligase route): step 1/1. In terms of biological role, succinyl-CoA synthetase functions in the citric acid cycle (TCA), coupling the hydrolysis of succinyl-CoA to the synthesis of either ATP or GTP and thus represents the only step of substrate-level phosphorylation in the TCA. The beta subunit provides nucleotide specificity of the enzyme and binds the substrate succinate, while the binding sites for coenzyme A and phosphate are found in the alpha subunit. The protein is Succinate--CoA ligase [ADP-forming] subunit beta of Chloroflexus aurantiacus (strain ATCC 29366 / DSM 635 / J-10-fl).